The following is a 3255-amino-acid chain: Genome polyprotein (3255 aa).

The region spanning 292-437 is the Peptidase S30 domain; sequence VMNQQTLTAL…HTLTHRMVQY (146 aa). Active-site for P1 proteinase activity residues include His-345, Asp-354, and Ser-388. The Involved in interaction with stylet and aphid transmission motif lies at 489-492; the sequence is KITC. The short motif at 747-749 is the Involved in virions binding and aphid transmission element; that stretch reads PTK. The Peptidase C6 domain occupies 773–895; the sequence is MFVAKDGYCY…ESEMQHYRVG (123 aa). Active-site for helper component proteinase activity residues include Cys-781 and His-854. Residues 1397–1549 form the Helicase ATP-binding domain; the sequence is EIAHNEYRDI…PMHMVDITTE (153 aa). 1410–1417 serves as a coordination point for ATP; that stretch reads GGVGSGKS. Positions 1499-1502 match the DECH box motif; that stretch reads DECH. Residues 1568–1727 form the Helicase C-terminal domain; it reads DATKKGDNIL…GLPVMTSNVS (160 aa). Positions 2062-2069 match the Nuclear localization signal motif; it reads EKGKKSGK. Residue Tyr-2084 is modified to O-(5'-phospho-RNA)-tyrosine. Residues 2215-2433 enclose the Peptidase C4 domain; it reads SKTLFRGLRD…MVWGGINLIN (219 aa). Residues His-2260, Asp-2295, and Cys-2365 each act as for nuclear inclusion protein A activity in the active site. One can recognise a RdRp catalytic domain in the interval 2699-2823; the sequence is WVYCDADGSQ…AIKPEYESLL (125 aa). The segment at 2980 to 3027 is disordered; that stretch reads TKLDAGQGSKNDDKQKSSADSKDNVITEKGSGSGQVRKDDDINAGLHG. Basic and acidic residues predominate over residues 2989-3005; it reads KNDDKQKSSADSKDNVI.

It belongs to the potyviridae genome polyprotein family. Interacts with host eIF4E protein (via cap-binding region); this interaction mediates the translation of the VPg-viral RNA conjugates. Part of a complex that comprises VPg, RNA, host EIF4E and EIF4G; this interaction mediates the translation of the VPg-viral RNA conjugates. In terms of processing, VPg is uridylylated by the polymerase and is covalently attached to the 5'-end of the genomic RNA. This uridylylated form acts as a nucleotide-peptide primer for the polymerase. Post-translationally, potyviral RNA is expressed as two polyproteins which undergo post-translational proteolytic processing. Genome polyprotein is processed by NIa-pro, P1 and HC-pro proteinases resulting in the production of at least ten individual proteins. P3N-PIPO polyprotein is cleaved by P1 and HC-pro proteinases resulting in the production of three individual proteins. The P1 proteinase and the HC-pro cleave only their respective C-termini autocatalytically. 6K1 is essential for proper proteolytic separation of P3 from CI.

It is found in the host cytoplasmic vesicle. The protein localises to the host nucleus. Its subcellular location is the virion. It carries out the reaction RNA(n) + a ribonucleoside 5'-triphosphate = RNA(n+1) + diphosphate. The enzyme catalyses Hydrolyzes glutaminyl bonds, and activity is further restricted by preferences for the amino acids in P6 - P1' that vary with the species of potyvirus, e.g. Glu-Xaa-Xaa-Tyr-Xaa-Gln-|-(Ser or Gly) for the enzyme from tobacco etch virus. The natural substrate is the viral polyprotein, but other proteins and oligopeptides containing the appropriate consensus sequence are also cleaved.. It catalyses the reaction Hydrolyzes a Gly-|-Gly bond at its own C-terminus, commonly in the sequence -Tyr-Xaa-Val-Gly-|-Gly, in the processing of the potyviral polyprotein.. Its function is as follows. Required for aphid transmission and also has proteolytic activity. Only cleaves a Gly-Gly dipeptide at its own C-terminus. Interacts with virions and aphid stylets. Acts as a suppressor of RNA-mediated gene silencing, also known as post-transcriptional gene silencing (PTGS), a mechanism of plant viral defense that limits the accumulation of viral RNAs. May have RNA-binding activity. In terms of biological role, has helicase activity. It may be involved in replication. Functionally, indispensable for virus replication. Mediates the cap-independent, EIF4E-dependent translation of viral genomic RNAs. Binds to the cap-binding site of host EIF4E and thus interferes with the host EIF4E-dependent mRNA export and translation. VPg-RNA directly binds EIF4E and is a template for transcription. Also forms trimeric complexes with EIF4E-EIF4G, which are templates for translation. Its function is as follows. Has RNA-binding and proteolytic activities. In terms of biological role, an RNA-dependent RNA polymerase that plays an essential role in the virus replication. Functionally, involved in aphid transmission, cell-to-cell and systemis movement, encapsidation of the viral RNA and in the regulation of viral RNA amplification. The protein is Genome polyprotein of Lettuce mosaic virus (strain E) (LMV).